A 372-amino-acid polypeptide reads, in one-letter code: Forkhead box protein F1-B (372 aa).

Positions 1–51 are disordered; that stretch reads MTAEIQQPPSQPPAQSSPMSAATDKHGGQPSAMESASCATKTKKTNAGIRR. Positions 13–22 are enriched in low complexity; sequence PAQSSPMSAA. Residues 54–148 constitute a DNA-binding region (fork-head); that stretch reads KPPYSYIALI…EEGSFRRRPR (95 aa).

At the late gastrula stage, expressed in the presumptive ventrolateral mesoderm. During neurulation and tailbud stages, expressed in the lateral plate mesoderm and in the neural crest-derived structures of the head and branchial arches. During tailbud stages, expressed in the pronephros and pronephros ducts and in cells that migrate from the dorsolateral plate to the ventral region of the embryo (with the notable exception of the heart). These cells may represent hematopoietic or endothelial progenitor cells.

It is found in the nucleus. Its function is as follows. Probable transcription factor. Required for smooth muscle (visceral mesoderm) differentiation during gut development. Also required for normal proliferation of the lateral plate mesoderm. Acts as a downstream mediator of bmp4-signaling. In Xenopus laevis (African clawed frog), this protein is Forkhead box protein F1-B (foxf1-b).